The following is a 341-amino-acid chain: MIEFRQVSKTFNKKKQKIDALKDVSFTVNRNDIFGVIGYSGAGKSTLVRLVNHLEAASNGQVIVDGHDITNYSDKMMRDIKKDIGMIFQHFNLLNSATVFKNVAMPLILSKKSKTEIKQRVTEMLEFVGLSDKKDQFPDELSGGQKQRVAIARALVTNPKILLCDEATSALDPATTASILTLLKNVNQTFGITIMMITHEMRVIKDICNRVAVMEKGKVVETGTVKEVFSHPKTTIAQNFVSTVIQTEPSTSLIRRLNDEQVGDFKDYKIFVEETQVTQPIINDLIQICGREVKILFSSMSEIQGNTVCYMWLRFNMDQQFEDTAINQYFKEKNIQFEEVH.

The 240-residue stretch at 2-241 (IEFRQVSKTF…PKTTIAQNFV (240 aa)) folds into the ABC transporter domain. 38-45 (GYSGAGKS) lines the ATP pocket.

The protein belongs to the ABC transporter superfamily. Methionine importer (TC 3.A.1.24) family. The complex is composed of two ATP-binding proteins (MetN), two transmembrane proteins (MetI) and a solute-binding protein (MetQ).

The protein resides in the cell membrane. The catalysed reaction is L-methionine(out) + ATP + H2O = L-methionine(in) + ADP + phosphate + H(+). The enzyme catalyses D-methionine(out) + ATP + H2O = D-methionine(in) + ADP + phosphate + H(+). In terms of biological role, part of the ABC transporter complex MetNIQ involved in methionine import. Responsible for energy coupling to the transport system. The protein is Methionine import ATP-binding protein MetN 1 of Staphylococcus aureus (strain USA300).